The primary structure comprises 302 residues: Methylsterol monooxygenase erg25A (302 aa).

An N-linked (GlcNAc...) asparagine glycan is attached at Asn-5. 3 consecutive transmembrane segments (helical) span residues 47–67 (NIVA…IYFS), 105–125 (YILL…HPMM), and 132–152 (FTIP…FFLL). In terms of domain architecture, Fatty acid hydroxylase spans 147–283 (IIFFLLEDTY…FRHWDVLMGT (137 aa)). The Histidine box-1 motif lies at 161–165 (HRAMH). Residues 174-178 (HRIHH) carry the Histidine box-2 motif. Residues 193–213 (PWETLLLGLGTIGPPLLLALM) form a helical membrane-spanning segment. The short motif at 258 to 264 (WHDDHHR) is the Histidine box-3 element. A glycan (N-linked (GlcNAc...) asparagine) is linked at Asn-269.

The protein belongs to the sterol desaturase family. The cofactor is Fe cation.

It localises to the endoplasmic reticulum membrane. The protein operates within steroid metabolism; ergosterol biosynthesis. Its function is as follows. Sterol-C4-methyl oxidase; part of the third module of ergosterol biosynthesis pathway that includes the late steps of the pathway. Erg25A is a catalytic component of the C-4 demethylation complex that catalyzes the conversion of 4,4-dimethylfecosterol into fecosterol via 4-methylfecosterol. The third module or late pathway involves the ergosterol synthesis itself through consecutive reactions that mainly occur in the endoplasmic reticulum (ER) membrane. Firstly, the squalene synthase erg9 catalyzes the condensation of 2 farnesyl pyrophosphate moieties to form squalene, which is the precursor of all steroids. Squalene synthase is crucial for balancing the incorporation of farnesyl diphosphate (FPP) into sterol and nonsterol isoprene synthesis. Secondly, squalene is converted into lanosterol by the consecutive action of the squalene epoxidase erg1 and the lanosterol synthase erg7. Then, the delta(24)-sterol C-methyltransferase erg6 methylates lanosterol at C-24 to produce eburicol. Eburicol is the substrate of the sterol 14-alpha demethylase encoded by cyp51A and cyp51B, to yield 4,4,24-trimethyl ergosta-8,14,24(28)-trienol. The C-14 reductase erg24 then reduces the C14=C15 double bond which leads to 4,4-dimethylfecosterol. A sequence of further demethylations at C-4, involving the C-4 demethylation complex containing the C-4 methylsterol oxidases erg25A or erg25B, the sterol-4-alpha-carboxylate 3-dehydrogenase erg26 and the 3-keto-steroid reductase erg27, leads to the production of fecosterol via 4-methylfecosterol. The C-8 sterol isomerase erg2 then catalyzes the reaction which results in unsaturation at C-7 in the B ring of sterols and thus converts fecosterol to episterol. The sterol-C5-desaturase erg3B then catalyzes the introduction of a C-5 double bond in the B ring to produce 5-dehydroepisterol. The 2 other sterol-C5-desaturases, erg3A and erg3C, seem to be less important in ergosterol biosynthesis. The C-22 sterol desaturase erg5 further converts 5-dehydroepisterol into ergosta-5,7,22,24(28)-tetraen-3beta-ol by forming the C-22(23) double bond in the sterol side chain. Finally, ergosta-5,7,22,24(28)-tetraen-3beta-ol is substrate of the C-24(28) sterol reductases erg4A and erg4B to produce ergosterol. Possible alternative sterol biosynthetic pathways might exist from fecosterol to ergosterol, depending on the activities of the erg3 isoforms. This chain is Methylsterol monooxygenase erg25A, found in Aspergillus fumigatus (strain ATCC MYA-4609 / CBS 101355 / FGSC A1100 / Af293) (Neosartorya fumigata).